The sequence spans 754 residues: MMSTYKRATLDEEDLVDSLSESDVYPNHLQVNFRGPRNGQRCWAARTPVEKRLVVLVALLAAALVACLAVLGIQYQTRTPSVCLSEACISVTSSILSSMDPTVDPCQDFFTYACGGWIKANPVPDGHSRWGTFSNLWEHNQAIIKHLLENSTASVSEAERKAQVYYRACMNETRIEELKAKPLMELIEKLGGWNITGPWDKDNFQDTLQVVTSHYHTSPFFSVYVSADSKNSNSNVIQVDQSGLGLPSRDYYLNKTENEKVLTGYLNYMVQLGKLLGGGAEDTIRPQMQQILDFETALANITIPQEKRRDEELIYHKVTAAELQTLAPAINWLPFLNTIFYPVEINESEPIVIYDKEYLSKVSTLINSTDKCLLNNYMIWNLVRKTSSFLDQRFQDADEKFMEVMYGTKKTCLPRWKFCVSDTENTLGFALGPMFVKATFAEDSKNIASEIILEIKKAFEESLSTLKWMDEDTRKSAKEKADAIYNMIGYPNFIMDPKELDKVFNDYTAVPDLYFENAMRFFNFSWRVTADQLRKAPNRDQWSMTPPMVNAYYSPTKNEIVFPAGILQAPFYTRSSPNALNFGGIGVVVGHELTHAFDDQGREYDKDGNLRPWWKNSSVEAFKQQTACMVEQYGNYSVNGEPVNGRHTLGENIADNGGLKAAYRAYQNWVKKNGAEQTLPTLGLTNNQLFFLSFAQVWCSVRTPESSHEGLITDPHSPSRFRVIGSISNSKEFSEHFHCPPGSPMNPHHKCEVW.

Topologically, residues 1 to 52 are cytoplasmic; it reads MMSTYKRATLDEEDLVDSLSESDVYPNHLQVNFRGPRNGQRCWAARTPVEKR. Thr-9 is modified (phosphothreonine). A helical; Signal-anchor for type II membrane protein transmembrane segment spans residues 53–73; it reads LVVLVALLAAALVACLAVLGI. Over 74–754 the chain is Extracellular; the sequence is QYQTRTPSVC…MNPHHKCEVW (681 aa). The Peptidase M13 domain occupies 82–754; the sequence is VCLSEACISV…MNPHHKCEVW (673 aa). Intrachain disulfides connect Cys-83–Cys-88, Cys-106–Cys-739, Cys-114–Cys-699, Cys-169–Cys-419, and Cys-628–Cys-751. Residues Asn-150, Asn-171, Asn-194, Asn-254, Asn-300, Asn-346, Asn-367, and Asn-523 are each glycosylated (N-linked (GlcNAc...) asparagine). His-591 is a Zn(2+) binding site. Glu-592 is a catalytic residue. His-595 is a Zn(2+) binding site. Residues Asn-616 and Asn-635 are each glycosylated (N-linked (GlcNAc...) asparagine). Residue Glu-651 coordinates Zn(2+). The Proton donor role is filled by Asp-655.

It belongs to the peptidase M13 family. As to quaternary structure, homodimer; disulfide-linked. Interacts with PPP1R16B. Interacts with TSPAN8; this interaction recruits the endothelin converting enzyme ECE1 to tetraspanin-enriched microdomains and positively modulates its enzymatic activity. Zn(2+) serves as cofactor.

It is found in the cell membrane. It catalyses the reaction Hydrolysis of the 21-Trp-|-Val-22 bond in big endothelin to form endothelin 1.. Inhibited by phosphoramidon. Its function is as follows. Converts big endothelin-1 to endothelin-1. The polypeptide is Endothelin-converting enzyme 1 (ECE1) (Bos taurus (Bovine)).